The primary structure comprises 267 residues: NH(3)-dependent NAD(+) synthetase (267 aa).

Residue 38–45 (GISGGVDS) participates in ATP binding. Position 44 (aspartate 44) interacts with Mg(2+). Residue arginine 123 participates in deamido-NAD(+) binding. Position 143 (threonine 143) interacts with ATP. Residue glutamate 148 coordinates Mg(2+). Residues lysine 156 and aspartate 163 each coordinate deamido-NAD(+). ATP-binding residues include lysine 172 and serine 193. 250–251 (HK) serves as a coordination point for deamido-NAD(+).

The protein belongs to the NAD synthetase family. In terms of assembly, homodimer.

The catalysed reaction is deamido-NAD(+) + NH4(+) + ATP = AMP + diphosphate + NAD(+) + H(+). It functions in the pathway cofactor biosynthesis; NAD(+) biosynthesis; NAD(+) from deamido-NAD(+) (ammonia route): step 1/1. Its function is as follows. Catalyzes the ATP-dependent amidation of deamido-NAD to form NAD. Uses ammonia as a nitrogen source. The sequence is that of NH(3)-dependent NAD(+) synthetase from Pyrobaculum aerophilum (strain ATCC 51768 / DSM 7523 / JCM 9630 / CIP 104966 / NBRC 100827 / IM2).